The primary structure comprises 309 residues: 4-hydroxy-3-methylbut-2-enyl diphosphate reductase (309 aa).

Residue Cys-13 coordinates [4Fe-4S] cluster. (2E)-4-hydroxy-3-methylbut-2-enyl diphosphate is bound by residues His-42 and His-75. Residues His-42 and His-75 each contribute to the dimethylallyl diphosphate site. Isopentenyl diphosphate contacts are provided by His-42 and His-75. Position 97 (Cys-97) interacts with [4Fe-4S] cluster. His-125 serves as a coordination point for (2E)-4-hydroxy-3-methylbut-2-enyl diphosphate. A dimethylallyl diphosphate-binding site is contributed by His-125. His-125 contributes to the isopentenyl diphosphate binding site. Glu-127 (proton donor) is an active-site residue. Thr-165 is a binding site for (2E)-4-hydroxy-3-methylbut-2-enyl diphosphate. Cys-195 contributes to the [4Fe-4S] cluster binding site. Residues Ser-223, Ser-224, Asn-225, and Ser-267 each contribute to the (2E)-4-hydroxy-3-methylbut-2-enyl diphosphate site. Ser-223, Ser-224, Asn-225, and Ser-267 together coordinate dimethylallyl diphosphate. Residues Ser-223, Ser-224, Asn-225, and Ser-267 each coordinate isopentenyl diphosphate.

It belongs to the IspH family. [4Fe-4S] cluster serves as cofactor.

The enzyme catalyses isopentenyl diphosphate + 2 oxidized [2Fe-2S]-[ferredoxin] + H2O = (2E)-4-hydroxy-3-methylbut-2-enyl diphosphate + 2 reduced [2Fe-2S]-[ferredoxin] + 2 H(+). The catalysed reaction is dimethylallyl diphosphate + 2 oxidized [2Fe-2S]-[ferredoxin] + H2O = (2E)-4-hydroxy-3-methylbut-2-enyl diphosphate + 2 reduced [2Fe-2S]-[ferredoxin] + 2 H(+). Its pathway is isoprenoid biosynthesis; dimethylallyl diphosphate biosynthesis; dimethylallyl diphosphate from (2E)-4-hydroxy-3-methylbutenyl diphosphate: step 1/1. It functions in the pathway isoprenoid biosynthesis; isopentenyl diphosphate biosynthesis via DXP pathway; isopentenyl diphosphate from 1-deoxy-D-xylulose 5-phosphate: step 6/6. In terms of biological role, catalyzes the conversion of 1-hydroxy-2-methyl-2-(E)-butenyl 4-diphosphate (HMBPP) into a mixture of isopentenyl diphosphate (IPP) and dimethylallyl diphosphate (DMAPP). Acts in the terminal step of the DOXP/MEP pathway for isoprenoid precursor biosynthesis. This chain is 4-hydroxy-3-methylbut-2-enyl diphosphate reductase, found in Chlamydia caviae (strain ATCC VR-813 / DSM 19441 / 03DC25 / GPIC) (Chlamydophila caviae).